Consider the following 244-residue polypeptide: Methylthioribulose-1-phosphate dehydratase (244 aa).

Cys89 serves as a coordination point for substrate. Positions 107 and 109 each coordinate Zn(2+). The active-site Proton donor/acceptor is Glu130. His192 lines the Zn(2+) pocket.

This sequence belongs to the aldolase class II family. MtnB subfamily. The cofactor is Zn(2+).

It localises to the cytoplasm. The enzyme catalyses 5-(methylsulfanyl)-D-ribulose 1-phosphate = 5-methylsulfanyl-2,3-dioxopentyl phosphate + H2O. Its pathway is amino-acid biosynthesis; L-methionine biosynthesis via salvage pathway; L-methionine from S-methyl-5-thio-alpha-D-ribose 1-phosphate: step 2/6. Catalyzes the dehydration of methylthioribulose-1-phosphate (MTRu-1-P) into 2,3-diketo-5-methylthiopentyl-1-phosphate (DK-MTP-1-P). The polypeptide is Methylthioribulose-1-phosphate dehydratase (Saccharomyces cerevisiae (strain YJM789) (Baker's yeast)).